Consider the following 316-residue polypeptide: Ribosomal RNA small subunit methyltransferase H (316 aa).

S-adenosyl-L-methionine contacts are provided by residues 35–37 (SGH), Asp55, Phe84, Asp105, and Gln112.

This sequence belongs to the methyltransferase superfamily. RsmH family.

Its subcellular location is the cytoplasm. The catalysed reaction is cytidine(1402) in 16S rRNA + S-adenosyl-L-methionine = N(4)-methylcytidine(1402) in 16S rRNA + S-adenosyl-L-homocysteine + H(+). Its function is as follows. Specifically methylates the N4 position of cytidine in position 1402 (C1402) of 16S rRNA. This Streptococcus equi subsp. zooepidemicus (strain MGCS10565) protein is Ribosomal RNA small subunit methyltransferase H.